A 448-amino-acid chain; its full sequence is CCA-adding enzyme (448 aa).

ATP is bound by residues serine 52 and lysine 55. Residues serine 52 and lysine 55 each contribute to the CTP site. Residues aspartate 64, aspartate 66, and aspartate 118 each coordinate Mg(2+). ATP contacts are provided by histidine 141, lysine 160, and tyrosine 169. CTP contacts are provided by histidine 141, lysine 160, and tyrosine 169.

The protein belongs to the tRNA nucleotidyltransferase/poly(A) polymerase family. Archaeal CCA-adding enzyme subfamily. As to quaternary structure, homodimer. Requires Mg(2+) as cofactor.

The enzyme catalyses a tRNA precursor + 2 CTP + ATP = a tRNA with a 3' CCA end + 3 diphosphate. The catalysed reaction is a tRNA with a 3' CCA end + 2 CTP + ATP = a tRNA with a 3' CCACCA end + 3 diphosphate. In terms of biological role, catalyzes the addition and repair of the essential 3'-terminal CCA sequence in tRNAs without using a nucleic acid template. Adds these three nucleotides in the order of C, C, and A to the tRNA nucleotide-73, using CTP and ATP as substrates and producing inorganic pyrophosphate. tRNA 3'-terminal CCA addition is required both for tRNA processing and repair. Also involved in tRNA surveillance by mediating tandem CCA addition to generate a CCACCA at the 3' terminus of unstable tRNAs. While stable tRNAs receive only 3'-terminal CCA, unstable tRNAs are marked with CCACCA and rapidly degraded. This chain is CCA-adding enzyme, found in Pyrococcus abyssi (strain GE5 / Orsay).